The primary structure comprises 700 residues: Polyribonucleotide nucleotidyltransferase (700 aa).

Residues Asp491 and Asp497 each contribute to the Mg(2+) site. A KH domain is found at 558–617; sequence PNYAVIEINPDKIRDVIGKGGATIRQLTEETGAVIDIDDAGTIRIFGENKAATKAAIAKI. The 69-residue stretch at 627 to 695 folds into the S1 motif domain; sequence GKTYEGTVAR…NRGRIKLTMK (69 aa).

The protein belongs to the polyribonucleotide nucleotidyltransferase family. As to quaternary structure, component of the RNA degradosome, which is a multiprotein complex involved in RNA processing and mRNA degradation. Mg(2+) is required as a cofactor.

It is found in the cytoplasm. It carries out the reaction RNA(n+1) + phosphate = RNA(n) + a ribonucleoside 5'-diphosphate. In terms of biological role, involved in mRNA degradation. Catalyzes the phosphorolysis of single-stranded polyribonucleotides processively in the 3'- to 5'-direction. This is Polyribonucleotide nucleotidyltransferase from Psychrobacter arcticus (strain DSM 17307 / VKM B-2377 / 273-4).